The chain runs to 484 residues: tRNA nucleotidyltransferase cca2 (484 aa).

Residues 122 to 124 carry the B/A element motif; sequence RAE. The tract at residues 125–142 is flexible loop; it reads SYDDKSRIPSVTPGTVET. Residues 234-244 carry the ERhxxExxxhh motif motif; it reads ERVGEEIEKML.

It belongs to the tRNA nucleotidyltransferase/poly(A) polymerase family.

It is found in the cytoplasm. The enzyme catalyses a tRNA with a 3' CC end + ATP = a tRNA with a 3' CCA end + diphosphate. TRNA nucleotidyltransferase involved in the synthesis of the tRNA CCA terminus. In contrast to what is usually observed in eukaryotes for which one enzyme synthesizes the whole tRNA CCA terminus, in S.pombe, cca1 specifically adds two cytidine residues to a tRNA substrate lacking this sequence while cca2 specifically adds the terminal adenosine residue thereby completing the CCA sequence. The polypeptide is tRNA nucleotidyltransferase cca2 (Schizosaccharomyces pombe (strain 972 / ATCC 24843) (Fission yeast)).